The primary structure comprises 134 residues: Small ribosomal subunit protein uS8 (134 aa).

Belongs to the universal ribosomal protein uS8 family. As to quaternary structure, part of the 30S ribosomal subunit. Contacts proteins S5 and S12.

Functionally, one of the primary rRNA binding proteins, it binds directly to 16S rRNA central domain where it helps coordinate assembly of the platform of the 30S subunit. This chain is Small ribosomal subunit protein uS8, found in Thermotoga neapolitana (strain ATCC 49049 / DSM 4359 / NBRC 107923 / NS-E).